The sequence spans 522 residues: MPGSLPVNTESCWPKDVGIVALEIYFPSQYVDQTELEKYDGVDAGKYTIGLGQSKMGFCSDREDINSLCLTVVQKLMERNSLSYDCIGRLEVGTETIIDKSKSVKTVLMQLFEESGNTDVEGIDTTNACYGGTAALFNAINWIESSSWDGRYALVVAGDIAVYATGNARPTGGAGAVAMLVGSNAPLIFERGLRGTHMQHAYDFYKPDMVSEYPVVDGKLSIQCYLSALDRCYSVYRNKIHAQWQKEGTDRGFTLNDFGFMIFHSPYCKLVQKSVARLLLNDFLSDQNAETANGVFSGLEAFRDVKLEDTYFDRDVEKAFMKASAELFNQKTKASLLVSNQNGNMYTPSVYGCLASLLAQYSPEHLAGQRISEFSYGSGFAATLYSIRVTQDATPGSALDKITASLSDLKARLDSRKCIAPDVFAENMKIRQETHHLANYIPQCSVEDLFEGTWYLVRVDEKHRRTYARRPVMGDGPLEAGVEVVHPGIVHEHIPSPAKKVPRIPATTESEGVTVAISNGVH.

(3S)-3-hydroxy-3-methylglutaryl-CoA-binding residues include Asp43 and Ala44. Glu95 acts as the Proton donor/acceptor in catalysis. Residues Cys129, Asn167, Thr171, Ser221, His264, Lys273, Asn344, and Ser378 each contribute to the (3S)-3-hydroxy-3-methylglutaryl-CoA site. Cys129 serves as the catalytic Acyl-thioester intermediate. The active-site Proton donor/acceptor is the His264.

This sequence belongs to the thiolase-like superfamily. HMG-CoA synthase family. In terms of assembly, homodimer.

The protein localises to the cytoplasm. The catalysed reaction is acetoacetyl-CoA + acetyl-CoA + H2O = (3S)-3-hydroxy-3-methylglutaryl-CoA + CoA + H(+). It functions in the pathway metabolic intermediate biosynthesis; (R)-mevalonate biosynthesis; (R)-mevalonate from acetyl-CoA: step 2/3. Its function is as follows. Catalyzes the condensation of acetyl-CoA with acetoacetyl-CoA to form HMG-CoA, which is converted by HMG-CoA reductase (HMGCR) into mevalonate, a precursor for cholesterol synthesis. This chain is Hydroxymethylglutaryl-CoA synthase, cytoplasmic (HMGCS1), found in Gallus gallus (Chicken).